Reading from the N-terminus, the 894-residue chain is Cell wall-associated protease (894 aa).

Residues 1–31 form the signal peptide; the sequence is MKRRKFSSVVAAVLIFALIFSLFSPGTKAAA. One can recognise a Peptidase S8 domain in the interval 422–729; that stretch reads QWPLKNNGEN…YGRLNVMKAV (308 aa). Residues Asp-462, His-497, and Ser-650 each act as charge relay system in the active site.

This sequence belongs to the peptidase S8 family. Proteolytically cleaved to yield CWBP23 and CWBP52.

The protein resides in the secreted. It is found in the cell wall. Its activity is regulated as follows. Inhibited by PMSF. Its function is as follows. CWBP52 is a serine-type protease that could be involved in proteoglycan peptide bridges. The sequence is that of Cell wall-associated protease (wprA) from Bacillus subtilis (strain 168).